The sequence spans 42 residues: Large ribosomal subunit protein bL36 (42 aa).

It belongs to the bacterial ribosomal protein bL36 family.

The sequence is that of Large ribosomal subunit protein bL36 from Ehrlichia canis (strain Jake).